The sequence spans 514 residues: 2,3-bisphosphoglycerate-independent phosphoglycerate mutase (514 aa).

Mn(2+)-binding residues include Asp-13 and Ser-63. Catalysis depends on Ser-63, which acts as the Phosphoserine intermediate. Substrate contacts are provided by residues His-124, 154 to 155 (RD), Arg-186, Arg-192, 258 to 261 (RADR), and Lys-332. 5 residues coordinate Mn(2+): Asp-399, His-403, Asp-440, His-441, and His-459.

It belongs to the BPG-independent phosphoglycerate mutase family. In terms of assembly, monomer. Mn(2+) is required as a cofactor.

It carries out the reaction (2R)-2-phosphoglycerate = (2R)-3-phosphoglycerate. It participates in carbohydrate degradation; glycolysis; pyruvate from D-glyceraldehyde 3-phosphate: step 3/5. Catalyzes the interconversion of 2-phosphoglycerate and 3-phosphoglycerate. In Legionella pneumophila (strain Lens), this protein is 2,3-bisphosphoglycerate-independent phosphoglycerate mutase.